The primary structure comprises 301 residues: Bifunctional protein FolD (301 aa).

NADP(+)-binding positions include 164 to 166 (GRS), serine 191, and isoleucine 232.

Belongs to the tetrahydrofolate dehydrogenase/cyclohydrolase family. In terms of assembly, homodimer.

The catalysed reaction is (6R)-5,10-methylene-5,6,7,8-tetrahydrofolate + NADP(+) = (6R)-5,10-methenyltetrahydrofolate + NADPH. It catalyses the reaction (6R)-5,10-methenyltetrahydrofolate + H2O = (6R)-10-formyltetrahydrofolate + H(+). The protein operates within one-carbon metabolism; tetrahydrofolate interconversion. Its function is as follows. Catalyzes the oxidation of 5,10-methylenetetrahydrofolate to 5,10-methenyltetrahydrofolate and then the hydrolysis of 5,10-methenyltetrahydrofolate to 10-formyltetrahydrofolate. The sequence is that of Bifunctional protein FolD from Borreliella afzelii (strain PKo) (Borrelia afzelii).